The chain runs to 227 residues: Cytochrome c oxidase subunit 2 (227 aa).

Residues 1-14 (MAYPMQLGFQDATS) are Mitochondrial intermembrane-facing. The chain crosses the membrane as a helical span at residues 15 to 45 (PIMEELLHFHDHTLMIVFLISSLVLYIISLM). The Mitochondrial matrix portion of the chain corresponds to 46-59 (LTTKLTHTSTMDAQ). Residues 60–87 (EVETVWTILPAIILIMIALPSLRILYMM) form a helical membrane-spanning segment. The Mitochondrial intermembrane portion of the chain corresponds to 88-227 (DEINNPSLTV…YFEKWSASML (140 aa)). Residues His161, Cys196, Glu198, Cys200, His204, and Met207 each contribute to the Cu cation site. Mg(2+) is bound at residue Glu198. Tyr218 bears the Phosphotyrosine mark.

The protein belongs to the cytochrome c oxidase subunit 2 family. As to quaternary structure, component of the cytochrome c oxidase (complex IV, CIV), a multisubunit enzyme composed of 14 subunits. The complex is composed of a catalytic core of 3 subunits MT-CO1, MT-CO2 and MT-CO3, encoded in the mitochondrial DNA, and 11 supernumerary subunits COX4I, COX5A, COX5B, COX6A, COX6B, COX6C, COX7A, COX7B, COX7C, COX8 and NDUFA4, which are encoded in the nuclear genome. The complex exists as a monomer or a dimer and forms supercomplexes (SCs) in the inner mitochondrial membrane with NADH-ubiquinone oxidoreductase (complex I, CI) and ubiquinol-cytochrome c oxidoreductase (cytochrome b-c1 complex, complex III, CIII), resulting in different assemblies (supercomplex SCI(1)III(2)IV(1) and megacomplex MCI(2)III(2)IV(2)). Found in a complex with TMEM177, COA6, COX18, COX20, SCO1 and SCO2. Interacts with TMEM177 in a COX20-dependent manner. Interacts with COX20. Interacts with COX16. Cu cation is required as a cofactor.

It is found in the mitochondrion inner membrane. It catalyses the reaction 4 Fe(II)-[cytochrome c] + O2 + 8 H(+)(in) = 4 Fe(III)-[cytochrome c] + 2 H2O + 4 H(+)(out). Component of the cytochrome c oxidase, the last enzyme in the mitochondrial electron transport chain which drives oxidative phosphorylation. The respiratory chain contains 3 multisubunit complexes succinate dehydrogenase (complex II, CII), ubiquinol-cytochrome c oxidoreductase (cytochrome b-c1 complex, complex III, CIII) and cytochrome c oxidase (complex IV, CIV), that cooperate to transfer electrons derived from NADH and succinate to molecular oxygen, creating an electrochemical gradient over the inner membrane that drives transmembrane transport and the ATP synthase. Cytochrome c oxidase is the component of the respiratory chain that catalyzes the reduction of oxygen to water. Electrons originating from reduced cytochrome c in the intermembrane space (IMS) are transferred via the dinuclear copper A center (CU(A)) of subunit 2 and heme A of subunit 1 to the active site in subunit 1, a binuclear center (BNC) formed by heme A3 and copper B (CU(B)). The BNC reduces molecular oxygen to 2 water molecules using 4 electrons from cytochrome c in the IMS and 4 protons from the mitochondrial matrix. This is Cytochrome c oxidase subunit 2 (MT-CO2) from Capra hircus (Goat).